The following is a 382-amino-acid chain: UDP-4-amino-4-deoxy-L-arabinose--oxoglutarate aminotransferase (382 aa).

Lys-183 is modified (N6-(pyridoxal phosphate)lysine).

The protein belongs to the DegT/DnrJ/EryC1 family. ArnB subfamily. Homodimer. It depends on pyridoxal 5'-phosphate as a cofactor.

The enzyme catalyses UDP-4-amino-4-deoxy-beta-L-arabinose + 2-oxoglutarate = UDP-beta-L-threo-pentopyranos-4-ulose + L-glutamate. Its pathway is nucleotide-sugar biosynthesis; UDP-4-deoxy-4-formamido-beta-L-arabinose biosynthesis; UDP-4-deoxy-4-formamido-beta-L-arabinose from UDP-alpha-D-glucuronate: step 2/3. It participates in bacterial outer membrane biogenesis; lipopolysaccharide biosynthesis. Catalyzes the conversion of UDP-4-keto-arabinose (UDP-Ara4O) to UDP-4-amino-4-deoxy-L-arabinose (UDP-L-Ara4N). The modified arabinose is attached to lipid A and is required for resistance to polymyxin and cationic antimicrobial peptides. This chain is UDP-4-amino-4-deoxy-L-arabinose--oxoglutarate aminotransferase, found in Pseudomonas aeruginosa (strain ATCC 15692 / DSM 22644 / CIP 104116 / JCM 14847 / LMG 12228 / 1C / PRS 101 / PAO1).